The chain runs to 75 residues: Large ribosomal subunit protein bL31 (75 aa).

It belongs to the bacterial ribosomal protein bL31 family. Type A subfamily. Part of the 50S ribosomal subunit.

Binds the 23S rRNA. The sequence is that of Large ribosomal subunit protein bL31 from Bradyrhizobium sp. (strain BTAi1 / ATCC BAA-1182).